A 356-amino-acid chain; its full sequence is Metacaspase-1 (356 aa).

The segment at 1-47 (MYSGRSGAPPPAHSPYPNSYNHGPPGHSAGHNVPPPPPTQPVQFGHG) is disordered. Catalysis depends on residues His-147 and Cys-203.

This sequence belongs to the peptidase C14B family.

Its function is as follows. Involved in cell death (apoptosis). The sequence is that of Metacaspase-1 (MCA1) from Ajellomyces capsulatus (strain NAm1 / WU24) (Darling's disease fungus).